Reading from the N-terminus, the 308-residue chain is Glycerol-3-phosphate dehydrogenase [NAD(P)+] (308 aa).

NADPH contacts are provided by Trp-15, Arg-35, Arg-36, and Lys-83. Residues Lys-83 and Gly-111 each contribute to the sn-glycerol 3-phosphate site. Ser-115 is an NADPH binding site. Sn-glycerol 3-phosphate-binding residues include Lys-166, Asp-219, Ser-229, Arg-230, and Asn-231. Lys-166 (proton acceptor) is an active-site residue. Arg-230 provides a ligand contact to NADPH. NADPH is bound at residue Glu-256.

The protein belongs to the NAD-dependent glycerol-3-phosphate dehydrogenase family.

It is found in the cytoplasm. The enzyme catalyses sn-glycerol 3-phosphate + NAD(+) = dihydroxyacetone phosphate + NADH + H(+). The catalysed reaction is sn-glycerol 3-phosphate + NADP(+) = dihydroxyacetone phosphate + NADPH + H(+). It functions in the pathway membrane lipid metabolism; glycerophospholipid metabolism. Its function is as follows. Catalyzes the reduction of the glycolytic intermediate dihydroxyacetone phosphate (DHAP) to sn-glycerol 3-phosphate (G3P), the key precursor for phospholipid synthesis. The protein is Glycerol-3-phosphate dehydrogenase [NAD(P)+] of Synechococcus elongatus (strain ATCC 33912 / PCC 7942 / FACHB-805) (Anacystis nidulans R2).